The following is a 236-amino-acid chain: Purine nucleoside phosphorylase DeoD-type 2 (236 aa).

An a purine D-ribonucleoside-binding site is contributed by H5. Phosphate-binding positions include G21, R25, R44, and R88–T91. A purine D-ribonucleoside contacts are provided by residues E180–E182 and S204–D205. D205 (proton donor) is an active-site residue.

The protein belongs to the PNP/UDP phosphorylase family. Homohexamer; trimer of homodimers.

The enzyme catalyses a purine D-ribonucleoside + phosphate = a purine nucleobase + alpha-D-ribose 1-phosphate. The catalysed reaction is a purine 2'-deoxy-D-ribonucleoside + phosphate = a purine nucleobase + 2-deoxy-alpha-D-ribose 1-phosphate. Its function is as follows. Catalyzes the reversible phosphorolytic breakdown of the N-glycosidic bond in the beta-(deoxy)ribonucleoside molecules, with the formation of the corresponding free purine bases and pentose-1-phosphate. The polypeptide is Purine nucleoside phosphorylase DeoD-type 2 (Shewanella oneidensis (strain ATCC 700550 / JCM 31522 / CIP 106686 / LMG 19005 / NCIMB 14063 / MR-1)).